Consider the following 172-residue polypeptide: Large ribosomal subunit protein bL9 (172 aa).

Belongs to the bacterial ribosomal protein bL9 family.

In terms of biological role, binds to the 23S rRNA. In Chlamydia abortus (strain DSM 27085 / S26/3) (Chlamydophila abortus), this protein is Large ribosomal subunit protein bL9.